The chain runs to 268 residues: Tryptophan synthase alpha chain (268 aa).

Residues Glu49 and Asp60 each act as proton acceptor in the active site.

It belongs to the TrpA family. Tetramer of two alpha and two beta chains.

The enzyme catalyses (1S,2R)-1-C-(indol-3-yl)glycerol 3-phosphate + L-serine = D-glyceraldehyde 3-phosphate + L-tryptophan + H2O. The protein operates within amino-acid biosynthesis; L-tryptophan biosynthesis; L-tryptophan from chorismate: step 5/5. Functionally, the alpha subunit is responsible for the aldol cleavage of indoleglycerol phosphate to indole and glyceraldehyde 3-phosphate. The protein is Tryptophan synthase alpha chain of Salmonella typhimurium (strain LT2 / SGSC1412 / ATCC 700720).